The chain runs to 214 residues: uncharacterized protein (214 aa).

The next 5 membrane-spanning stretches (helical) occupy residues leucine 18–valine 38, aspartate 51–glycine 71, isoleucine 80–valine 100, leucine 108–valine 128, and phenylalanine 145–isoleucine 165.

The protein resides in the cell membrane. This is an uncharacterized protein from Geobacillus stearothermophilus (Bacillus stearothermophilus).